A 59-amino-acid chain; its full sequence is UPF0181 protein YoaH (59 aa).

This sequence belongs to the UPF0181 family.

This is UPF0181 protein YoaH from Shigella flexneri.